A 205-amino-acid chain; its full sequence is Glycerol-3-phosphate acyltransferase (205 aa).

5 consecutive transmembrane segments (helical) span residues 13–33 (LLALAALIGYLLGSIPFGLIL), 68–88 (LLLDALKGTAAVLVANALWGY), 90–110 (ASLVAGFFAFLGHLFPVWLGF), 120–140 (IGVLLGAAPLMMLAFALIWLA), and 147–167 (YSSLSALLAMLIIPVALWVLG).

It belongs to the PlsY family. As to quaternary structure, probably interacts with PlsX.

It localises to the cell inner membrane. The catalysed reaction is an acyl phosphate + sn-glycerol 3-phosphate = a 1-acyl-sn-glycero-3-phosphate + phosphate. It participates in lipid metabolism; phospholipid metabolism. Functionally, catalyzes the transfer of an acyl group from acyl-phosphate (acyl-PO(4)) to glycerol-3-phosphate (G3P) to form lysophosphatidic acid (LPA). This enzyme utilizes acyl-phosphate as fatty acyl donor, but not acyl-CoA or acyl-ACP. In Agrobacterium fabrum (strain C58 / ATCC 33970) (Agrobacterium tumefaciens (strain C58)), this protein is Glycerol-3-phosphate acyltransferase.